The sequence spans 151 residues: Calmodulin-like protein 9 (151 aa).

EF-hand domains lie at 8–43 (EQIQ…MGKN), 44–79 (PKAE…NTSQ), 81–116 (SASD…MGMK), and 117–151 (ITAE…AASY). 8 residues coordinate Ca(2+): D94, D96, D98, E105, D130, D132, D134, and E141.

Belongs to the calmodulin family. Interacts with IQD1. Interacts with ILK1. Binds to ABCG36. In terms of tissue distribution, expressed in leaves, flowers and siliques.

Its function is as follows. Potential calcium sensor. This Arabidopsis thaliana (Mouse-ear cress) protein is Calmodulin-like protein 9.